Here is a 172-residue protein sequence, read N- to C-terminus: Disulfide bond formation protein B (172 aa).

The Cytoplasmic portion of the chain corresponds to 1–16 (MNLFASLNQFSKNRIS). A helical transmembrane segment spans residues 17–33 (WLLLLLFVVFFEGAALF). Residues 34–51 (FQHVMMLSPCVMCIYERV) are Periplasmic-facing. A disulfide bridge links Cys-43 with Cys-46. A helical membrane pass occupies residues 52-67 (AMLGVGGAALFGLIAP). Residues 68-74 (NNPLVRW) are Cytoplasmic-facing. The chain crosses the membrane as a helical span at residues 75–92 (LGLAAWGASAYKGLALSL). At 93–147 (QHVDYQFNPSPFATCDLFVTFPDWAPLNQWAPWMFEAYGDCSKIVWQFMTLSMPQ) the chain is on the periplasmic side. A disulfide bond links Cys-107 and Cys-133. A helical membrane pass occupies residues 148-166 (WLVIIFAGNLVALAFIVIA). The Cytoplasmic portion of the chain corresponds to 167–172 (QFFKSK).

The protein belongs to the DsbB family.

It is found in the cell inner membrane. Required for disulfide bond formation in some periplasmic proteins. Acts by oxidizing the DsbA protein. This is Disulfide bond formation protein B from Vibrio vulnificus (strain CMCP6).